We begin with the raw amino-acid sequence, 239 residues long: MAKPCGVRLSGEARKQVDVFRQNLFQEAEEFLYRFLPQKIIYLSQLLQEDSLNVTDLTSLRAPLDIPIPDPPPKDDEMETDKQEKKEVPKCGFLPGNEKILALLGLVKPEVWTLKEKCILVITWIQHLIPKIEDGNDFGVAVQEKVLERVNAVKTKVEAFQTTISKYFSERGDAVAKASKETHVMDYRALVHERDEAAHGELRAMVLDLRAFYAELYHIISSNLEKIVDPKGEEKPSMY.

Ala2 carries the N-acetylalanine modification. Phosphoserine is present on Ser10. The segment at 65-86 is disordered; it reads DIPIPDPPPKDDEMETDKQEKK. Positions 72–86 are enriched in basic and acidic residues; sequence PPKDDEMETDKQEKK.

The protein belongs to the PA28 family. In terms of assembly, heterodimer of PSME1 and PSME2, which forms a hexameric ring.

Implicated in immunoproteasome assembly and required for efficient antigen processing. The PA28 activator complex enhances the generation of class I binding peptides by altering the cleavage pattern of the proteasome. This chain is Proteasome activator complex subunit 2 (PSME2), found in Sus scrofa (Pig).